The sequence spans 436 residues: Phosphoribosylamine--glycine ligase (436 aa).

Positions 106–318 (RKLFEDYRIP…MLEICEGIVD (213 aa)) constitute an ATP-grasp domain. An ATP-binding site is contributed by 133–196 (MEDFDSEAVV…EERVVGEEFT (64 aa)). Residues Q276, E288, and N290 each contribute to the Mg(2+) site. Residues Q276, E288, and N290 each coordinate Mn(2+).

It belongs to the GARS family. Requires Mg(2+) as cofactor. Mn(2+) is required as a cofactor.

It catalyses the reaction 5-phospho-beta-D-ribosylamine + glycine + ATP = N(1)-(5-phospho-beta-D-ribosyl)glycinamide + ADP + phosphate + H(+). It functions in the pathway purine metabolism; IMP biosynthesis via de novo pathway; N(1)-(5-phospho-D-ribosyl)glycinamide from 5-phospho-alpha-D-ribose 1-diphosphate: step 2/2. The chain is Phosphoribosylamine--glycine ligase from Methanothermobacter thermautotrophicus (strain ATCC 29096 / DSM 1053 / JCM 10044 / NBRC 100330 / Delta H) (Methanobacterium thermoautotrophicum).